The following is an 886-amino-acid chain: Chitin synthase 3 (886 aa).

Disordered regions lie at residues 1–70 and 86–138; these read MQQG…YQTD and PYEP…AGGG. Residues 7-17 show a composition bias toward basic and acidic residues; it reads LDDRPYGRPEQ. Positions 37-56 are enriched in polar residues; the sequence is PSDQLQLNAAQSVDNLSRNS. An N-linked (GlcNAc...) asparagine glycan is attached at asparagine 51. Residues 106–122 are compositionally biased toward basic and acidic residues; it reads YDHDDLRPMLPHQDSHA. An N-linked (GlcNAc...) asparagine glycan is attached at asparagine 196. 7 helical membrane-spanning segments follow: residues 428 to 448, 526 to 546, 556 to 576, 602 to 622, 637 to 657, 683 to 703, and 712 to 732; these read SAFG…YVAL, RWLN…YQFF, VMLF…WFAV, ILGV…FVLS, MVYF…FIAV, TLIV…FLMF, and FVQY…YAFC. The segment at 745–768 is disordered; it reads DQAEKLPSVSTKDGSGKTDLPDES. 2 helical membrane-spanning segments follow: residues 813 to 833 and 858 to 878; these read VLAW…AAGL and VVLW…MWFL.

This sequence belongs to the chitin synthase family. Class I subfamily.

It is found in the cell membrane. It catalyses the reaction [(1-&gt;4)-N-acetyl-beta-D-glucosaminyl](n) + UDP-N-acetyl-alpha-D-glucosamine = [(1-&gt;4)-N-acetyl-beta-D-glucosaminyl](n+1) + UDP + H(+). Functionally, polymerizes chitin, a structural polymer of the cell wall and septum, by transferring the sugar moiety of UDP-GlcNAc to the non-reducing end of the growing chitin polymer. Involved in tolerance to hyperosmotic conditions. CHS3 is the only V.dahliae chitin synthase that is not involved in virulence. This is Chitin synthase 3 from Verticillium dahliae (strain VdLs.17 / ATCC MYA-4575 / FGSC 10137) (Verticillium wilt).